The sequence spans 275 residues: UPF0328 protein ECU05_0050 (275 aa).

This sequence belongs to the UPF0328 family.

This Encephalitozoon cuniculi (strain GB-M1) (Microsporidian parasite) protein is UPF0328 protein ECU05_0050.